The sequence spans 177 residues: Probasin (177 aa).

The signal sequence occupies residues 1–17 (MRVILLLLTLDVLGVSS). Cysteines 79 and 170 form a disulfide.

This sequence belongs to the calycin superfamily. Lipocalin family. Prostatic epithelial cells.

The protein resides in the nucleus. The protein localises to the secreted. The chain is Probasin (Pbsn) from Rattus norvegicus (Rat).